A 322-amino-acid polypeptide reads, in one-letter code: tRNA uridine(34) hydroxylase (322 aa).

The Rhodanese domain occupies Gln125–Lys219. Residue Cys179 is the Cysteine persulfide intermediate of the active site.

It belongs to the TrhO family.

The catalysed reaction is uridine(34) in tRNA + AH2 + O2 = 5-hydroxyuridine(34) in tRNA + A + H2O. Functionally, catalyzes oxygen-dependent 5-hydroxyuridine (ho5U) modification at position 34 in tRNAs. In Bacillus pumilus (strain SAFR-032), this protein is tRNA uridine(34) hydroxylase.